A 576-amino-acid chain; its full sequence is Protein HYPER-SENSITIVITY-RELATED 4 (576 aa).

Residues 55–75 (LATAKTVLTTAASVAATAMLA) form a helical membrane-spanning segment. 306 to 313 (GPPGTGKS) provides a ligand contact to ATP. Residues 508–532 (DKAKTEKQELENKKKTKEGTDSVVK) are disordered.

It belongs to the AAA ATPase family. BCS1 subfamily. Binds to the Yariv phenylglycoside (beta-D-Glc)(3). Requires Mg(2+) as cofactor.

Its subcellular location is the membrane. It catalyses the reaction ATP + H2O = ADP + phosphate + H(+). The protein is Protein HYPER-SENSITIVITY-RELATED 4 of Arabidopsis thaliana (Mouse-ear cress).